We begin with the raw amino-acid sequence, 714 residues long: Angiogenic factor with G patch and FHA domains 1 (714 aa).

Pro residues predominate over residues 1 to 18; it reads MASEAPSPPRSPPPPTSP. 3 disordered regions span residues 1 to 22, 259 to 307, and 322 to 384; these read MASE…EPEL, QPYP…HTSC, and IGIH…SYDE. A2 carries the post-translational modification N-acetylalanine. Residues S7 and S11 each carry the phosphoserine modification. Positions 18–88 form a coiled coil; sequence PEPELAQLRR…QRGRNEDNKK (71 aa). Basic and acidic residues predominate over residues 279–298; it reads KDPDSSATNEEKDLNSEDQK. Residues 335–355 show a composition bias toward polar residues; the sequence is VPTSGNTIESPLHENISNSTS. The residue at position 344 (S344) is a Phosphoserine. A compositionally biased stretch (acidic residues) spans 364–383; the sequence is TDSEPEEGEITDSQTEDSYD. Residues 434 to 487 enclose the FHA domain; it reads ATIGREKDMEHTLRIPEVGVSKFHAEIYFDHDLQSYVLVDQGSQNGTIVNGKQI. Residues 586 to 609 show a composition bias toward basic and acidic residues; sequence KYKDRAGKRREQVGSEGTFQRDDA. 2 disordered regions span residues 586-617 and 655-714; these read KYKD…HSEI and RTHA…GTLE. The region spanning 619–665 is the G-patch domain; that stretch reads DSNKGRKMLEKMGWKKGEGLGKDGGGMKTPIQLQLRRTHAGLGTGKP. The residue at position 664 (K664) is an N6-acetyllysine. Over residues 680–690 the composition is skewed to basic and acidic residues; the sequence is KNWDKARERFT.

Interacts with the secreted angiogenic factor TNFSF12. Widely expressed. Expressed in endothelial cells, vascular smooth muscle cells and osteoblasts. Expressed in umbilical vein endothelial cells and microvascular endothelial cells.

Its subcellular location is the cytoplasm. The protein resides in the secreted. Its function is as follows. Promotes angiogenesis and the proliferation of endothelial cells. Able to bind to endothelial cells and promote cell proliferation, suggesting that it may act in an autocrine fashion. The sequence is that of Angiogenic factor with G patch and FHA domains 1 (AGGF1) from Homo sapiens (Human).